Reading from the N-terminus, the 494-residue chain is Peptidyl-prolyl cis-trans isomerase-like 4 (494 aa).

One can recognise a PPIase cyclophilin-type domain in the interval 1–172; sequence MSVLLETSAG…VDIRIKHTVI (172 aa). The tract at residues 176–196 is disordered; the sequence is PYPDPAGMREPSASPPPSKAQ. Residues 206 to 240 adopt a coiled-coil conformation; the sequence is EELLDVEASEEAAAEAERRRREREAAAQALTLEMM. The RRM domain maps to 253 to 331; sequence NVLFVCKLNP…RRIHVDFSQS (79 aa). Basic and acidic residues-rich tracts occupy residues 391–418 and 425–494; these read DLKG…DRST and PRRD…YRRR. The disordered stretch occupies residues 391–494; it reads DLKGRHDGDK…NRGRDDYRRR (104 aa).

This sequence belongs to the cyclophilin-type PPIase family. PPIL4 subfamily.

It is found in the nucleus. The enzyme catalyses [protein]-peptidylproline (omega=180) = [protein]-peptidylproline (omega=0). PPIases accelerate the folding of proteins. It catalyzes the cis-trans isomerization of proline imidic peptide bonds in oligopeptides. In Neurospora crassa (strain ATCC 24698 / 74-OR23-1A / CBS 708.71 / DSM 1257 / FGSC 987), this protein is Peptidyl-prolyl cis-trans isomerase-like 4 (cyp-6).